The chain runs to 328 residues: tRNA uridine(34) hydroxylase (328 aa).

Positions 122-218 constitute a Rhodanese domain; it reads QENRCLVLDV…YGLKMGTGKW (97 aa). Cys-178 functions as the Cysteine persulfide intermediate in the catalytic mechanism.

Belongs to the TrhO family.

The enzyme catalyses uridine(34) in tRNA + AH2 + O2 = 5-hydroxyuridine(34) in tRNA + A + H2O. In terms of biological role, catalyzes oxygen-dependent 5-hydroxyuridine (ho5U) modification at position 34 in tRNAs. The sequence is that of tRNA uridine(34) hydroxylase from Chlamydia muridarum (strain MoPn / Nigg).